The primary structure comprises 261 residues: Short chain dehydrogenase/reductase astE (261 aa).

Positions 24, 70, 97, and 131 each coordinate NADP(+). Residues Ser-150 and Tyr-164 each act as proton donor in the active site. 4 residues coordinate NADP(+): Tyr-164, Lys-168, Val-197, and Thr-199. The Lowers pKa of active site Tyr role is filled by Lys-168.

The protein belongs to the short-chain dehydrogenases/reductases (SDR) family.

Its pathway is secondary metabolite biosynthesis; terpenoid biosynthesis. Functionally, short chain dehydrogenase/reductase; part of the gene cluster that mediates the biosynthesis of astellolides, drimane-type sesquiterpene esters that show antimicrobial, anti-inflammatory, and anti-tumor activities. The first step in astellolide biosynthesis is performed by the sesquiterpene cyclase astC that catalyzes the formation of drimanyl pyrophosphate from farnesyl pyrophosphate. Drimanyl pyrophosphate is then dephosphorylated by the sesquiterpene phosphatase astI to produce drimanyl monophosphate which is further dephosphorylated to drim-8-ene-11-ol by atsK. Drim-8-ene-11-ol is converted to confertifolin, probably by the cytochrome P450 monooxygenase astD and/or the dehydrogenase astE. The cytochrome P450 monooxygenases astB, astF and astJ then hydroxylate confertifolin at C6, C14, or C15 to form trihydroxy confertifolin. The nonribosomal peptide synthetase astA catalyzes ester bond formation between trihydroxy contifolin and benzoic acid (BA) or 4-hydroxy benzoic acid (4HBA), leading to the formation of dideacetyl astellolides A and B, respectively. Finally, the O-acetyltransferase astG converts dideacetyl astellolides A and B into deacetyl astellolides A and B. The chain is Short chain dehydrogenase/reductase astE from Aspergillus oryzae (strain ATCC 42149 / RIB 40) (Yellow koji mold).